Here is a 284-residue protein sequence, read N- to C-terminus: Bifunctional protein FolD (284 aa).

NADP(+) is bound by residues 166–168 (GAS) and I232.

This sequence belongs to the tetrahydrofolate dehydrogenase/cyclohydrolase family. Homodimer.

The catalysed reaction is (6R)-5,10-methylene-5,6,7,8-tetrahydrofolate + NADP(+) = (6R)-5,10-methenyltetrahydrofolate + NADPH. It catalyses the reaction (6R)-5,10-methenyltetrahydrofolate + H2O = (6R)-10-formyltetrahydrofolate + H(+). The protein operates within one-carbon metabolism; tetrahydrofolate interconversion. Catalyzes the oxidation of 5,10-methylenetetrahydrofolate to 5,10-methenyltetrahydrofolate and then the hydrolysis of 5,10-methenyltetrahydrofolate to 10-formyltetrahydrofolate. This Pseudomonas fluorescens (strain Pf0-1) protein is Bifunctional protein FolD.